A 426-amino-acid polypeptide reads, in one-letter code: Histidine--tRNA ligase (426 aa).

This sequence belongs to the class-II aminoacyl-tRNA synthetase family. As to quaternary structure, homodimer.

It localises to the cytoplasm. The enzyme catalyses tRNA(His) + L-histidine + ATP = L-histidyl-tRNA(His) + AMP + diphosphate + H(+). The polypeptide is Histidine--tRNA ligase (Streptococcus equi subsp. zooepidemicus (strain MGCS10565)).